We begin with the raw amino-acid sequence, 100 residues long: Aspartyl/glutamyl-tRNA(Asn/Gln) amidotransferase subunit C (100 aa).

It belongs to the GatC family. Heterotrimer of A, B and C subunits.

It catalyses the reaction L-glutamyl-tRNA(Gln) + L-glutamine + ATP + H2O = L-glutaminyl-tRNA(Gln) + L-glutamate + ADP + phosphate + H(+). It carries out the reaction L-aspartyl-tRNA(Asn) + L-glutamine + ATP + H2O = L-asparaginyl-tRNA(Asn) + L-glutamate + ADP + phosphate + 2 H(+). Allows the formation of correctly charged Asn-tRNA(Asn) or Gln-tRNA(Gln) through the transamidation of misacylated Asp-tRNA(Asn) or Glu-tRNA(Gln) in organisms which lack either or both of asparaginyl-tRNA or glutaminyl-tRNA synthetases. The reaction takes place in the presence of glutamine and ATP through an activated phospho-Asp-tRNA(Asn) or phospho-Glu-tRNA(Gln). The sequence is that of Aspartyl/glutamyl-tRNA(Asn/Gln) amidotransferase subunit C from Streptococcus equi subsp. zooepidemicus (strain H70).